We begin with the raw amino-acid sequence, 816 residues long: MDNPHYYSPPITRNVIGKRVPRTEDARLLTGRGKYLNDINVDGQLHACFVRSPAAHAQITGIDTSAASEMPGVHLVWTSADIEQYCAGIEAQYTAEGCEAMTMPLLAKDVVRYVGEPVVLVVAESRAAAEDACDLVGLELEHLEVVLDPRKSIQGGPVANGERPDNVGIRGRASFGDVDEAFSNAEHVVSALYHPGRVAAAPMETRGCLADYEWTEDRLKLWVSTQMPHYVKMCLSLFLGFDESRSEVISPDTGGGFGQKAHVFPEEMLMPLASKHLKTPVKWVEDRRENLLAGSHAHEQFVTIQYAANAEGRITGVRTHALVDGGAYHMPPQTMAVECWATAAVTPTGVYDIPAAEYVYEGAVTNKCPMGAFRGVGYTAGTLARESLMDDLARKMKVSPFEIRRRNVVREFPWTNPQGVVYEEGSFLEVIDALEEMVDYPAFLRRQDEARKAGKYLGLGISVFVESSGESTGMMQAHGATDVFHDTATVKMDSTGSVTITSGLNSQGQGHQTTLAQVAADVLGIPFESISVDAGTSTKGAYGSGTIGSRAAVIAGGCVNRAAYAIRQKLVAVAANMLESSEEDIVLEDGFASVIGAAESRVSIADVAMAVYWDSSKWPAGFEPGLEFTKAWDTSRPMFSNGGHALIVELDPVTGFVKVEKVYSVEDCGVIINPTIVEGQIRGGVVQGIGMGLFEQLAYDNAGNLSTTSFLDYQTPTMDVSPPFEIRHIETPSVMTASGVKGMGESGLISAPAAVLNAVNDALSPFGSVLYELPATPEKVVRATKGIIDLQGPQDWSELWERAGVPALDRGPMDRE.

E745 lines the Mo-molybdopterin cytosine dinucleotide pocket.

It belongs to the xanthine dehydrogenase family. Heterotrimer composed of a large subunit (NdhL), a medium subunit (NdhM) and a small subunit (NdhS). Requires Mo-molybdopterin cytosine dinucleotide as cofactor.

Its subcellular location is the cytoplasm. The catalysed reaction is (R)-nicotine + A + H2O = (R)-6-hydroxynicotine + AH2. The enzyme catalyses (S)-nicotine + A + H2O = (S)-6-hydroxynicotine + AH2. The protein operates within alkaloid degradation; nicotine degradation; 6-hydroxypseudooxynicotine from nicotine (R-isomer route): step 1/2. It participates in alkaloid degradation; nicotine degradation; 6-hydroxypseudooxynicotine from nicotine (S-isomer route): step 1/2. With respect to regulation, nicotine dehydrogenase activity is inhibited by tungsten. Functionally, component of the nicotine 6-hydroxylase, which is involved in the degradation of nicotine. Catalyzes the hydroxylation of the pyridine ring at C6 to form 6-hydroxynicotine. Can use both L-nicotine and D-nicotine. The sequence is that of Nicotine 6-hydroxylase large subunit from Paenarthrobacter nicotinovorans (Arthrobacter nicotinovorans).